Reading from the N-terminus, the 208-residue chain is 2-phospho-L-lactate guanylyltransferase (208 aa).

The protein belongs to the CofC family. Homodimer.

The catalysed reaction is (2S)-2-phospholactate + GTP + H(+) = (2S)-lactyl-2-diphospho-5'-guanosine + diphosphate. Its pathway is cofactor biosynthesis; coenzyme F420 biosynthesis. Its function is as follows. Guanylyltransferase that catalyzes the activation of (2S)-2-phospholactate (2-PL) as (2S)-lactyl-2-diphospho-5'-guanosine, via the condensation of 2-PL with GTP. It is involved in the biosynthesis of coenzyme F420, a hydride carrier cofactor. In Methanosarcina mazei (strain ATCC BAA-159 / DSM 3647 / Goe1 / Go1 / JCM 11833 / OCM 88) (Methanosarcina frisia), this protein is 2-phospho-L-lactate guanylyltransferase.